Here is a 132-residue protein sequence, read N- to C-terminus: Small ribosomal subunit protein uS11 (132 aa).

Positions 1–21 are disordered; the sequence is MAAPKSAVRKPRRKDKKNIAV. Residues 7 to 16 are compositionally biased toward basic residues; it reads AVRKPRRKDK.

Belongs to the universal ribosomal protein uS11 family. Part of the 30S ribosomal subunit. Interacts with proteins S7 and S18. Binds to IF-3.

In terms of biological role, located on the platform of the 30S subunit, it bridges several disparate RNA helices of the 16S rRNA. Forms part of the Shine-Dalgarno cleft in the 70S ribosome. This chain is Small ribosomal subunit protein uS11, found in Clavibacter sepedonicus (Clavibacter michiganensis subsp. sepedonicus).